The primary structure comprises 307 residues: Mitochondrial thiamine pyrophosphate carrier 1 (307 aa).

3 Solcar repeats span residues 13-95 (VSTT…IGSF), 105-190 (SPQL…IKIF), and 203-305 (PFTL…FMNK). Helical transmembrane passes span 19–36 (LVAGSLSGLFARTCIAPL), 76–96 (IMYIIYGGAQFGSYTYIGSFL), 108–126 (LYSCLVGSLAGMTSSLASY), 160–184 (MGFFSGCGSSMINIGLNTAIMFGVY), 210–226 (LAGPISGFTSKLATFPL), and 280–297 (GVTMSLIKSVPSTAISLW).

Belongs to the mitochondrial carrier (TC 2.A.29) family.

It is found in the mitochondrion inner membrane. Mitochondrial transporter that mediates uptake of thiamine pyrophosphate (ThPP) into mitochondria. This Candida glabrata (strain ATCC 2001 / BCRC 20586 / JCM 3761 / NBRC 0622 / NRRL Y-65 / CBS 138) (Yeast) protein is Mitochondrial thiamine pyrophosphate carrier 1 (TPC1).